The primary structure comprises 640 residues: Threonine--tRNA ligase (640 aa).

Residues 224 to 525 form a catalytic region; that stretch reads DHRKLGKELD…LTEHYAGAFP (302 aa). Residues Cys-323, His-374, and His-502 each coordinate Zn(2+).

The protein belongs to the class-II aminoacyl-tRNA synthetase family. In terms of assembly, homodimer. Zn(2+) is required as a cofactor.

The protein resides in the cytoplasm. It carries out the reaction tRNA(Thr) + L-threonine + ATP = L-threonyl-tRNA(Thr) + AMP + diphosphate + H(+). Catalyzes the attachment of threonine to tRNA(Thr) in a two-step reaction: L-threonine is first activated by ATP to form Thr-AMP and then transferred to the acceptor end of tRNA(Thr). Also edits incorrectly charged L-seryl-tRNA(Thr). The chain is Threonine--tRNA ligase from Tropheryma whipplei (strain Twist) (Whipple's bacillus).